Reading from the N-terminus, the 482-residue chain is tRNA-2-methylthio-N(6)-dimethylallyladenosine synthase (482 aa).

In terms of domain architecture, MTTase N-terminal spans 3-120 (KKLHIKTWGC…LPEMIKQVQG (118 aa)). [4Fe-4S] cluster contacts are provided by Cys-12, Cys-49, Cys-83, Cys-158, Cys-162, and Cys-165. The Radical SAM core domain maps to 144–376 (KADGPSAFVS…QNRITQMAQQ (233 aa)). Residues 379–442 (RQMFDTEQRI…PNSLRGDLIR (64 aa)) enclose the TRAM domain.

Belongs to the methylthiotransferase family. MiaB subfamily. As to quaternary structure, monomer. [4Fe-4S] cluster serves as cofactor.

It is found in the cytoplasm. The catalysed reaction is N(6)-dimethylallyladenosine(37) in tRNA + (sulfur carrier)-SH + AH2 + 2 S-adenosyl-L-methionine = 2-methylsulfanyl-N(6)-dimethylallyladenosine(37) in tRNA + (sulfur carrier)-H + 5'-deoxyadenosine + L-methionine + A + S-adenosyl-L-homocysteine + 2 H(+). Catalyzes the methylthiolation of N6-(dimethylallyl)adenosine (i(6)A), leading to the formation of 2-methylthio-N6-(dimethylallyl)adenosine (ms(2)i(6)A) at position 37 in tRNAs that read codons beginning with uridine. This Pseudoalteromonas translucida (strain TAC 125) protein is tRNA-2-methylthio-N(6)-dimethylallyladenosine synthase.